Here is a 208-residue protein sequence, read N- to C-terminus: Guanylate kinase (208 aa).

A Guanylate kinase-like domain is found at 5–184 (GLLIVFSGPS…AAERVKCVIE (180 aa)). Residue 12-19 (GPSGVGKG) coordinates ATP.

It belongs to the guanylate kinase family.

The protein localises to the cytoplasm. The catalysed reaction is GMP + ATP = GDP + ADP. Its function is as follows. Essential for recycling GMP and indirectly, cGMP. This is Guanylate kinase from Streptococcus pneumoniae serotype 4 (strain ATCC BAA-334 / TIGR4).